The following is a 64-amino-acid chain: Large ribosomal subunit protein bL33 (64 aa).

The protein belongs to the bacterial ribosomal protein bL33 family.

The sequence is that of Large ribosomal subunit protein bL33 from Gloeothece citriformis (strain PCC 7424) (Cyanothece sp. (strain PCC 7424)).